The chain runs to 553 residues: RNA exonuclease 1 (553 aa).

The residue at position 24 (Ser-24) is a Phosphoserine. Residues 167–194 are a coiled coil; the sequence is MEKINKLKELQKKKKITINDLVLSEQQL. Residues 225-373 form the Exonuclease domain; it reads IFALDCEMCL…EDARACLELT (149 aa). Residues 509–533 are a coiled coil; it reads WNNLSTELEFIQDKKERLDKRRERE.

Belongs to the REXO1/REXO3 family.

It localises to the nucleus. Functionally, 3' exoribonuclease required for 5S rRNA maturation and for the proper maturation of the 5' cistron of the tRNA-Arg3 dicistronic gene. Involved with REX2 in the maturation of the 5.8S rRNA, and with REX2 and REX3, in the 3' processing of the U5L snRNA. The chain is RNA exonuclease 1 (RNH70) from Saccharomyces cerevisiae (strain ATCC 204508 / S288c) (Baker's yeast).